We begin with the raw amino-acid sequence, 449 residues long: Deoxyguanosinetriphosphate triphosphohydrolase-like protein (449 aa).

The disordered stretch occupies residues 1–27 (MTSSVWQERRHGEDKQRRNDHRSPYQR). Basic and acidic residues predominate over residues 7-27 (QERRHGEDKQRRNDHRSPYQR). Positions 59–255 (RLTHSLEVSQ…MELADDIAYA (197 aa)) constitute an HD domain.

Belongs to the dGTPase family. Type 2 subfamily.

The polypeptide is Deoxyguanosinetriphosphate triphosphohydrolase-like protein (Shewanella baltica (strain OS185)).